The primary structure comprises 232 residues: 7-cyano-7-deazaguanine synthase (232 aa).

8 to 18 contributes to the ATP binding site; sequence FSGGQDSTTCL. The Zn(2+) site is built by Cys189, Cys198, Cys201, and Cys204.

This sequence belongs to the QueC family. It depends on Zn(2+) as a cofactor.

It catalyses the reaction 7-carboxy-7-deazaguanine + NH4(+) + ATP = 7-cyano-7-deazaguanine + ADP + phosphate + H2O + H(+). The protein operates within purine metabolism; 7-cyano-7-deazaguanine biosynthesis. Functionally, catalyzes the ATP-dependent conversion of 7-carboxy-7-deazaguanine (CDG) to 7-cyano-7-deazaguanine (preQ(0)). The chain is 7-cyano-7-deazaguanine synthase from Photorhabdus laumondii subsp. laumondii (strain DSM 15139 / CIP 105565 / TT01) (Photorhabdus luminescens subsp. laumondii).